The chain runs to 841 residues: mRNA export factor ICP27 homolog (841 aa).

Disordered stretches follow at residues 12 to 82 and 115 to 163; these read PFAG…QYDK and RAQG…TSPD. The span at 32-49 shows a compositional bias: low complexity; sequence YSQQQSQHYYYGHNQSSY. Pro residues predominate over residues 66–79; it reads MPPPLSSPSSPPPQ. Positions 132–147 are enriched in low complexity; the sequence is SSLVSSNNSNNNTTLS. 4 residues coordinate Zn(2+): Cys-298, His-411, Cys-413, and Cys-418. The CHC2-type zinc finger occupies 298–418; it reads CLLDSPGGGG…PGHRCQNEIC (121 aa). 2 disordered regions span residues 444-749 and 774-811; these read HPNG…DDLH and SVTP…TDQP. The span at 495–507 shows a compositional bias: basic and acidic residues; sequence VDSRGGGGDRRGD. Residues 514–526 are compositionally biased toward basic residues; that stretch reads NHHRHHTRRARTR. Residues 553-563 are compositionally biased toward basic and acidic residues; the sequence is RRGEAQRESNG. Low complexity-rich tracts occupy residues 568 to 579 and 591 to 603; these read KSPSTVSSTTVH and SRKS…QPET. Residues 614–623 are compositionally biased toward pro residues; it reads MPPPPSPCSP. Positions 641–657 are enriched in basic and acidic residues; that stretch reads RPHDPPSGEPADAEKEL. Residues 688–699 are compositionally biased toward low complexity; the sequence is DSSSSSSDSSSS. The span at 708-731 shows a compositional bias: basic and acidic residues; the sequence is EDCRELDLQSKRLEEALEERCERD. Composition is skewed to acidic residues over residues 732–749 and 793–809; these read FEAD…DDLH and DAEE…DETD.

This sequence belongs to the HHV-1 ICP27 protein family.

It is found in the virion tegument. Its subcellular location is the virion. The protein resides in the host nucleus. The protein localises to the host cytoplasm. In terms of biological role, immediate early (EI) protein that plays many roles during productive infection including regulation of viral gene expression and nuclear export of intronless viral RNAs. This Mus musculus (Mouse) protein is mRNA export factor ICP27 homolog.